The primary structure comprises 358 residues: Holliday junction branch migration complex subunit RuvB (358 aa).

Positions Met-1–Tyr-183 are large ATPase domain (RuvB-L). ATP is bound by residues Leu-22, Arg-23, Gly-64, Lys-67, Thr-68, Thr-69, Glu-130–Phe-132, Arg-173, Tyr-183, and Arg-220. Residue Thr-68 participates in Mg(2+) binding. The segment at Ser-184–Glu-254 is small ATPAse domain (RuvB-S). Residues Glu-257–Gly-358 are head domain (RuvB-H). Residues Arg-312 and Arg-317 each contribute to the DNA site.

The protein belongs to the RuvB family. As to quaternary structure, homohexamer. Forms an RuvA(8)-RuvB(12)-Holliday junction (HJ) complex. HJ DNA is sandwiched between 2 RuvA tetramers; dsDNA enters through RuvA and exits via RuvB. An RuvB hexamer assembles on each DNA strand where it exits the tetramer. Each RuvB hexamer is contacted by two RuvA subunits (via domain III) on 2 adjacent RuvB subunits; this complex drives branch migration. In the full resolvosome a probable DNA-RuvA(4)-RuvB(12)-RuvC(2) complex forms which resolves the HJ.

It is found in the cytoplasm. It catalyses the reaction ATP + H2O = ADP + phosphate + H(+). Its function is as follows. The RuvA-RuvB-RuvC complex processes Holliday junction (HJ) DNA during genetic recombination and DNA repair, while the RuvA-RuvB complex plays an important role in the rescue of blocked DNA replication forks via replication fork reversal (RFR). RuvA specifically binds to HJ cruciform DNA, conferring on it an open structure. The RuvB hexamer acts as an ATP-dependent pump, pulling dsDNA into and through the RuvAB complex. RuvB forms 2 homohexamers on either side of HJ DNA bound by 1 or 2 RuvA tetramers; 4 subunits per hexamer contact DNA at a time. Coordinated motions by a converter formed by DNA-disengaged RuvB subunits stimulates ATP hydrolysis and nucleotide exchange. Immobilization of the converter enables RuvB to convert the ATP-contained energy into a lever motion, pulling 2 nucleotides of DNA out of the RuvA tetramer per ATP hydrolyzed, thus driving DNA branch migration. The RuvB motors rotate together with the DNA substrate, which together with the progressing nucleotide cycle form the mechanistic basis for DNA recombination by continuous HJ branch migration. Branch migration allows RuvC to scan DNA until it finds its consensus sequence, where it cleaves and resolves cruciform DNA. This Paenarthrobacter aurescens (strain TC1) protein is Holliday junction branch migration complex subunit RuvB.